Reading from the N-terminus, the 477-residue chain is Methylenetetrahydrofolate--tRNA-(uracil-5-)-methyltransferase TrmFO (477 aa).

Residue G15–G20 coordinates FAD.

It belongs to the MnmG family. TrmFO subfamily. FAD serves as cofactor.

It localises to the cytoplasm. The catalysed reaction is uridine(54) in tRNA + (6R)-5,10-methylene-5,6,7,8-tetrahydrofolate + NADH + H(+) = 5-methyluridine(54) in tRNA + (6S)-5,6,7,8-tetrahydrofolate + NAD(+). It catalyses the reaction uridine(54) in tRNA + (6R)-5,10-methylene-5,6,7,8-tetrahydrofolate + NADPH + H(+) = 5-methyluridine(54) in tRNA + (6S)-5,6,7,8-tetrahydrofolate + NADP(+). Functionally, catalyzes the folate-dependent formation of 5-methyl-uridine at position 54 (M-5-U54) in all tRNAs. The chain is Methylenetetrahydrofolate--tRNA-(uracil-5-)-methyltransferase TrmFO from Nitrobacter winogradskyi (strain ATCC 25391 / DSM 10237 / CIP 104748 / NCIMB 11846 / Nb-255).